Reading from the N-terminus, the 216-residue chain is Somatotropin (216 aa).

The signal sequence occupies residues 1-26 (MAAGPRTSVLLAFALLCLPWTQEVGA). His45 provides a ligand contact to Zn(2+). Residues Cys78 and Cys189 are joined by a disulfide bond. The residue at position 131 (Ser131) is a Phosphoserine. Zn(2+) is bound at residue Glu198. Residues Cys206 and Cys214 are joined by a disulfide bond.

Belongs to the somatotropin/prolactin family.

Its subcellular location is the secreted. Functionally, plays an important role in growth control. Its major role in stimulating body growth is to stimulate the liver and other tissues to secrete IGF1. It stimulates both the differentiation and proliferation of myoblasts. It also stimulates amino acid uptake and protein synthesis in muscle and other tissues. In Hippopotamus amphibius (Hippopotamus), this protein is Somatotropin (GH1).